The primary structure comprises 143 residues: Nucleoside diphosphate kinase (143 aa).

ATP contacts are provided by Lys11, Phe59, Arg87, Thr93, Arg104, and Asn114. His117 (pros-phosphohistidine intermediate) is an active-site residue.

Belongs to the NDK family. As to quaternary structure, homotetramer. Mg(2+) serves as cofactor.

The protein localises to the cytoplasm. The enzyme catalyses a 2'-deoxyribonucleoside 5'-diphosphate + ATP = a 2'-deoxyribonucleoside 5'-triphosphate + ADP. It catalyses the reaction a ribonucleoside 5'-diphosphate + ATP = a ribonucleoside 5'-triphosphate + ADP. Functionally, major role in the synthesis of nucleoside triphosphates other than ATP. The ATP gamma phosphate is transferred to the NDP beta phosphate via a ping-pong mechanism, using a phosphorylated active-site intermediate. The sequence is that of Nucleoside diphosphate kinase from Shewanella piezotolerans (strain WP3 / JCM 13877).